Here is a 354-residue protein sequence, read N- to C-terminus: Methylthioribose-1-phosphate isomerase (354 aa).

Residues arginine 49–alanine 51, arginine 92, and glutamine 199 contribute to the substrate site. Aspartate 240 functions as the Proton donor in the catalytic mechanism. Asparagine 250–lysine 251 provides a ligand contact to substrate.

Belongs to the eIF-2B alpha/beta/delta subunits family. MtnA subfamily.

The catalysed reaction is 5-(methylsulfanyl)-alpha-D-ribose 1-phosphate = 5-(methylsulfanyl)-D-ribulose 1-phosphate. It functions in the pathway amino-acid biosynthesis; L-methionine biosynthesis via salvage pathway; L-methionine from S-methyl-5-thio-alpha-D-ribose 1-phosphate: step 1/6. In terms of biological role, catalyzes the interconversion of methylthioribose-1-phosphate (MTR-1-P) into methylthioribulose-1-phosphate (MTRu-1-P). The chain is Methylthioribose-1-phosphate isomerase from Koribacter versatilis (strain Ellin345).